A 104-amino-acid polypeptide reads, in one-letter code: L-rhamnose mutarotase (104 aa).

Tyr-18 lines the substrate pocket. The active-site Proton donor is the His-22. Substrate contacts are provided by residues Tyr-41 and 76–77; that span reads WW.

This sequence belongs to the rhamnose mutarotase family. Homodimer.

The protein resides in the cytoplasm. It carries out the reaction alpha-L-rhamnose = beta-L-rhamnose. It functions in the pathway carbohydrate metabolism; L-rhamnose metabolism. In terms of biological role, involved in the anomeric conversion of L-rhamnose. This chain is L-rhamnose mutarotase, found in Burkholderia ambifaria (strain MC40-6).